Reading from the N-terminus, the 767-residue chain is Lysyl oxidase homolog 2 (767 aa).

The N-terminal stretch at 1 to 19 (MLVTHIFLLTLSLSVPTLG) is a signal peptide. SRCR domains follow at residues 51–152 (VRLA…VQCS), 181–295 (IRAI…VSCT), 319–418 (VRLR…VRCN), and 428–537 (VRLS…VSCV). Disulfide bonds link Cys-77/Cys-141, Cys-90/Cys-151, Cys-121/Cys-131, Cys-211/Cys-284, Cys-224/Cys-294, Cys-258/Cys-268, Cys-344/Cys-407, Cys-357/Cys-417, and Cys-388/Cys-398. N-linked (GlcNAc...) asparagine glycosylation is present at Asn-281. An N-linked (GlcNAc...) asparagine glycan is attached at Asn-448. Intrachain disulfides connect Cys-457–Cys-523, Cys-470–Cys-536, and Cys-504–Cys-514. The interval 541-744 (PDLVLNAALV…WMYNCHIGGS (204 aa)) is lysyl-oxidase like. Ca(2+) contacts are provided by Asp-542 and Leu-543. 4 disulfides stabilise this stretch: Cys-566-Cys-618, Cys-572-Cys-688, Cys-650-Cys-666, and Cys-656-Cys-678. 3 residues coordinate Cu cation: His-619, His-621, and His-623. Asn-637 is a glycosylation site (N-linked (GlcNAc...) asparagine). A cross-link (lysine tyrosylquinone (Lys-Tyr)) is located at residues 646–682 (KASFCLEDSECETDVQKQYACANFGEQGITVGCWDVY). Tyr-682 bears the 2',4',5'-topaquinone mark. Ca(2+) is bound by residues Glu-715, Asp-717, Asn-720, and Asn-721. A disulfide bridge connects residues Cys-725 and Cys-739.

It belongs to the lysyl oxidase family. The cofactor is Cu cation. Lysine tyrosylquinone residue is required as a cofactor. Post-translationally, the lysine tyrosylquinone cross-link (LTQ) is generated by condensation of the epsilon-amino group of a lysine with a topaquinone produced by oxidation of tyrosine.

Its subcellular location is the secreted. The protein localises to the extracellular space. It is found in the extracellular matrix. The protein resides in the basement membrane. It localises to the nucleus. Its subcellular location is the chromosome. The protein localises to the endoplasmic reticulum. The enzyme catalyses L-lysyl-[protein] + O2 + H2O = (S)-2-amino-6-oxohexanoyl-[protein] + H2O2 + NH4(+). In terms of biological role, mediates the post-translational oxidative deamination of lysine residues on target proteins leading to the formation of deaminated lysine (allysine). Acts as a transcription corepressor and specifically mediates deamination of trimethylated 'Lys-4' of histone H3 (H3K4me3), a specific tag for epigenetic transcriptional activation. Shows no activity against histone H3 when it is trimethylated on 'Lys-9' (H3K9me3) or 'Lys-27' (H3K27me3) or when 'Lys-4' is monomethylated (H3K4me1) or dimethylated (H3K4me2). Also mediates deamination of methylated TAF10, a member of the transcription factor IID (TFIID) complex, which induces release of TAF10 from promoters, leading to inhibition of TFIID-dependent transcription. LOXL2-mediated deamination of TAF10 results in transcriptional repression of genes required for embryonic stem cell pluripotency. Involved in epithelial to mesenchymal transition (EMT) and participates in repression of E-cadherin, probably by mediating deamination of histone H3. When secreted into the extracellular matrix, promotes cross-linking of extracellular matrix proteins by mediating oxidative deamination of peptidyl lysine residues in precursors to fibrous collagen and elastin. Acts as a regulator of sprouting angiogenesis, probably via collagen IV scaffolding. Acts as a regulator of chondrocyte differentiation, probably by regulating expression of factors that control chondrocyte differentiation. This chain is Lysyl oxidase homolog 2 (loxl2), found in Xenopus tropicalis (Western clawed frog).